Here is an 842-residue protein sequence, read N- to C-terminus: Elongation factor 2 (842 aa).

One can recognise a tr-type G domain in the interval 17–346 (TNVRNMSVIA…MIVLHLPSPV (330 aa)). GTP-binding positions include 26-33 (AHVDHGKS), 158-161 (NKVD), and 213-215 (SGL). N6,N6,N6-trimethyllysine; by EFM3; alternate is present on Lys509. At Lys509 the chain carries N6,N6-dimethyllysine; by EFM3; alternate. Lys509 is subject to N6-methyllysine; by EFM3; alternate. Ser579 is subject to Phosphoserine. Position 613 is an N6,N6-dimethyllysine; by EFM2; alternate (Lys613). Lys613 is subject to N6-methyllysine; by EFM2; alternate. The residue at position 699 (His699) is a Diphthamide. Residues Thr713 and Thr763 each carry the phosphothreonine modification. Lys841 is covalently cross-linked (Glycyl lysine isopeptide (Lys-Gly) (interchain with G-Cter in ubiquitin)).

The protein belongs to the TRAFAC class translation factor GTPase superfamily. Classic translation factor GTPase family. EF-G/EF-2 subfamily. Binds to 80S ribosomes. Actively translating ribosomes show mutually exclusive binding of eIF5a (HYP2 or ANB1) and EFT1/eEF2. Interacts with the 40S ribosomal subunit protein RPL9A; the interaction is direct. Interacts with the 60S ribosomal subunit proteins RPL12A; the interaction is direct. Interacts with RPS23A; the interaction is direct. Interacts with 18S rRNA; the interaction is direct. Interacts with 25S rRNA; the interaction is direct. Interacts with RPL0. Interacts with STM1; promoting ribosome inactivation. In terms of processing, (Microbial infection) Diphthamide can be ADP-ribosylated by diphtheria toxin and by Pseudomonas exotoxin A, thus abolishing its function.

The protein resides in the cytoplasm. The catalysed reaction is GTP + H2O = GDP + phosphate + H(+). Its pathway is protein biosynthesis; polypeptide chain elongation. Its activity is regulated as follows. Inhibited by fusidic acid and sordarin, which prevent the release of eEF2 from the ribosome after the translocation step. While fusidic acid acts on all eukaryotic eEF2, sordarin specifically binds and inhibits only selected fungal eEF2. Catalyzes the GTP-dependent ribosomal translocation step during translation elongation. During this step, the ribosome changes from the pre-translocational (PRE) to the post-translocational (POST) state as the newly formed A-site-bound peptidyl-tRNA and P-site-bound deacylated tRNA move to the P and E sites, respectively. Catalyzes the coordinated movement of the two tRNA molecules, the mRNA and conformational changes in the ribosome. The polypeptide is Elongation factor 2 (EFT1) (Saccharomyces cerevisiae (strain ATCC 204508 / S288c) (Baker's yeast)).